The sequence spans 196 residues: MRNASCKRVTGETDISMELNLDGTGCAAVATGHAFFDHMLDLLARHSLMDLTLQARGDLEVDAHHTVEDVGIVLGECIKNALGDKKGIVRYGCSYLPMDETLTRVVMDLSNRPYVAFRIPEGGLPDAPNFPLTLCEEFCRALANNLRCNLHVEVLYGRDGHHIAESVFKGIAHALRQAAAIDPRAAGTLPSTKGML.

The protein belongs to the imidazoleglycerol-phosphate dehydratase family.

It localises to the cytoplasm. It catalyses the reaction D-erythro-1-(imidazol-4-yl)glycerol 3-phosphate = 3-(imidazol-4-yl)-2-oxopropyl phosphate + H2O. The protein operates within amino-acid biosynthesis; L-histidine biosynthesis; L-histidine from 5-phospho-alpha-D-ribose 1-diphosphate: step 6/9. This Akkermansia muciniphila (strain ATCC BAA-835 / DSM 22959 / JCM 33894 / BCRC 81048 / CCUG 64013 / CIP 107961 / Muc) protein is Imidazoleglycerol-phosphate dehydratase.